The sequence spans 178 residues: Large ribosomal subunit protein uL6 (178 aa).

Belongs to the universal ribosomal protein uL6 family. In terms of assembly, part of the 50S ribosomal subunit.

Functionally, this protein binds to the 23S rRNA, and is important in its secondary structure. It is located near the subunit interface in the base of the L7/L12 stalk, and near the tRNA binding site of the peptidyltransferase center. The sequence is that of Large ribosomal subunit protein uL6 from Helicobacter pylori (strain J99 / ATCC 700824) (Campylobacter pylori J99).